We begin with the raw amino-acid sequence, 1280 residues long: Rho guanine nucleotide exchange factor 10-like protein (1280 aa).

Positions 1–10 (MASSNPPPQP) are enriched in pro residues. Residues 1-94 (MASSNPPPQP…TEAPTVVSNG (94 aa)) form a disordered region. Acidic residues predominate over residues 26-46 (EVEEDSGEAFEFDDSDEEEDT). Serine 40 is modified (phosphoserine). The span at 78-89 (PAAAPPQTEAPT) shows a compositional bias: low complexity. Phosphotyrosine is present on residues tyrosine 131 and tyrosine 152. The tract at residues 161-202 (PRETEDLGWSSSEFESYSEDSGEETKPEAEPTKHRGSFQPKL) is disordered. Over residues 183–193 (EETKPEAEPTK) the composition is skewed to basic and acidic residues. A Phosphoserine modification is found at serine 279. The DH domain occupies 314–501 (VRRHILGSIV…ETLAEKLNEQ (188 aa)). 2 disordered regions span residues 1133–1163 (QEEA…HTAR) and 1186–1207 (PLLS…SEED).

Interacts with RHOA, RHOB and RHOC.

It localises to the cytoplasm. In terms of biological role, acts as a guanine nucleotide exchange factor (GEF) for RHOA, RHOB and RHOC. The polypeptide is Rho guanine nucleotide exchange factor 10-like protein (Arhgef10l) (Mus musculus (Mouse)).